The chain runs to 147 residues: Transcriptional regulator MraZ (147 aa).

SpoVT-AbrB domains are found at residues 5–52 and 81–124; these read SHAI…PETE and ATTL…SEEA.

It belongs to the MraZ family. In terms of assembly, forms oligomers.

The protein localises to the cytoplasm. It localises to the nucleoid. The sequence is that of Transcriptional regulator MraZ from Saccharophagus degradans (strain 2-40 / ATCC 43961 / DSM 17024).